The chain runs to 134 residues: MTLNLCVLTPNRIIWDSEVKEIILSTNSGQIGVLPNHAPIATAVDIGILKIRLQEQWLTMALMGGFARIGNNEITILVNDAEKGSDIDPQEAQQTLEIAEANLSRAEGKRQTIEANLALRRARTRVEAINAISS.

The protein belongs to the ATPase epsilon chain family. F-type ATPases have 2 components, CF(1) - the catalytic core - and CF(0) - the membrane proton channel. CF(1) has five subunits: alpha(3), beta(3), gamma(1), delta(1), epsilon(1). CF(0) has three main subunits: a, b and c.

It is found in the plastid. It localises to the chloroplast thylakoid membrane. Functionally, produces ATP from ADP in the presence of a proton gradient across the membrane. The sequence is that of ATP synthase epsilon chain, chloroplastic from Amborella trichopoda.